We begin with the raw amino-acid sequence, 231 residues long: Small ribosomal subunit protein uS3 (231 aa).

Residues 39 to 108 (IKNYIKKRYK…EISISVLEVK (70 aa)) form the KH type-2 domain.

The protein belongs to the universal ribosomal protein uS3 family. In terms of assembly, part of the 30S ribosomal subunit. Forms a tight complex with proteins S10 and S14.

Functionally, binds the lower part of the 30S subunit head. Binds mRNA in the 70S ribosome, positioning it for translation. The sequence is that of Small ribosomal subunit protein uS3 from Aquifex pyrophilus.